We begin with the raw amino-acid sequence, 622 residues long: Protein translocase subunit SecD (622 aa).

A run of 6 helical transmembrane segments spans residues 6-26, 460-480, 485-505, 512-532, 559-579, and 584-604; these read FKIG…YPTV, AGLR…IFYY, MIAD…LAAF, PGIA…VLIF, AIFD…SFGV, and GFAV…IVIT.

The protein belongs to the SecD/SecF family. SecD subfamily. Forms a complex with SecF. Part of the essential Sec protein translocation apparatus which comprises SecA, SecYEG and auxiliary proteins SecDF. Other proteins may also be involved.

It is found in the cell inner membrane. Its function is as follows. Part of the Sec protein translocase complex. Interacts with the SecYEG preprotein conducting channel. SecDF uses the proton motive force (PMF) to complete protein translocation after the ATP-dependent function of SecA. The protein is Protein translocase subunit SecD of Rhodothermus marinus (strain ATCC 43812 / DSM 4252 / R-10) (Rhodothermus obamensis).